The following is a 387-amino-acid chain: Involucrin (387 aa).

Disordered regions lie at residues 1–319 (MSQQ…VHLG) and 347–387 (VCIP…LKQE). Polar residues predominate over residues 28–37 (NTQQDQMKQP). Positions 62-71 (QVPEQECEPQ) are enriched in low complexity. Basic and acidic residues-rich tracts occupy residues 85-96 (KQQEPQEQEVHP), 104-115 (QEQEAHLGKKQE), 147-179 (QEVH…KQLQ), and 231-245 (QLEK…ELHL).

The protein belongs to the involucrin family. As to quaternary structure, directly or indirectly cross-linked to cornifelin (CNFN). Post-translationally, substrate of transglutaminase. Specific glutamines or lysines are cross-linked to keratins, desmoplakin and to inter involucrin molecules. Keratinocytes of epidermis and other stratified squamous epithelia.

It is found in the cytoplasm. In terms of biological role, part of the insoluble cornified cell envelope (CE) of stratified squamous epithelia. The polypeptide is Involucrin (IVL) (Cephalopachus bancanus (Western tarsier)).